Reading from the N-terminus, the 321-residue chain is Anthranilate phosphoribosyltransferase (321 aa).

Residues Gly-72, 75–76 (GD), Thr-80, 82–85 (NVST), 99–107 (KHGNVSITS), and Ser-111 each bind 5-phospho-alpha-D-ribose 1-diphosphate. Position 72 (Gly-72) interacts with anthranilate. Ser-84 serves as a coordination point for Mg(2+). Asn-102 provides a ligand contact to anthranilate. Residue Arg-157 coordinates anthranilate. Mg(2+) is bound by residues Asp-216 and Glu-217.

It belongs to the anthranilate phosphoribosyltransferase family. As to quaternary structure, homodimer. Mg(2+) serves as cofactor.

The catalysed reaction is N-(5-phospho-beta-D-ribosyl)anthranilate + diphosphate = 5-phospho-alpha-D-ribose 1-diphosphate + anthranilate. Its pathway is amino-acid biosynthesis; L-tryptophan biosynthesis; L-tryptophan from chorismate: step 2/5. Functionally, catalyzes the transfer of the phosphoribosyl group of 5-phosphorylribose-1-pyrophosphate (PRPP) to anthranilate to yield N-(5'-phosphoribosyl)-anthranilate (PRA). The polypeptide is Anthranilate phosphoribosyltransferase (Methanococcus maripaludis (strain C6 / ATCC BAA-1332)).